Reading from the N-terminus, the 100-residue chain is uncharacterized protein (100 aa).

3 helical membrane-spanning segments follow: residues 7–28 (TLIG…LLSL), 38–60 (AQLS…ILII), and 65–87 (LSAL…ANGV).

The protein resides in the cell membrane. This is an uncharacterized protein from Archaeoglobus fulgidus (strain ATCC 49558 / DSM 4304 / JCM 9628 / NBRC 100126 / VC-16).